The following is a 390-amino-acid chain: Protein SOSEKI 4 (390 aa).

The tract at residues 22–115 is DIX-like oligomerization domain; sequence RMAEVLYVLS…YALKATKRFD (94 aa). 2 disordered regions span residues 210 to 247 and 291 to 321; these read KSNS…NRTG and RESN…SGGS. Residues 304 to 321 show a composition bias toward polar residues; it reads PSVQAETHVSKLSKSGGS.

It belongs to the SOSEKI family. Homodimer. Forms long polymer filaments with other SOKs proteins polymers crucial for polar localization and biological activity.

It is found in the cell membrane. In terms of biological role, SOSEKI proteins locally interpret global polarity cues and can influence cell division orientation to coordinate cell polarization relative to body axes. The sequence is that of Protein SOSEKI 4 from Physcomitrium patens (Spreading-leaved earth moss).